Reading from the N-terminus, the 297-residue chain is Release factor glutamine methyltransferase (297 aa).

Residues 134-138 (GTGSG), D157, and N200 contribute to the S-adenosyl-L-methionine site. Substrate is bound at residue 200 to 203 (NPPY).

Belongs to the protein N5-glutamine methyltransferase family. PrmC subfamily.

It carries out the reaction L-glutaminyl-[peptide chain release factor] + S-adenosyl-L-methionine = N(5)-methyl-L-glutaminyl-[peptide chain release factor] + S-adenosyl-L-homocysteine + H(+). Its function is as follows. Methylates the class 1 translation termination release factors RF1/PrfA and RF2/PrfB on the glutamine residue of the universally conserved GGQ motif. In Bradyrhizobium diazoefficiens (strain JCM 10833 / BCRC 13528 / IAM 13628 / NBRC 14792 / USDA 110), this protein is Release factor glutamine methyltransferase.